Consider the following 496-residue polypeptide: MKKNLHPIMLAGTGSDVGKSVIAAALCRIFKQDGYRPAPFKAQNMALNSYATPEGLEIGRAQAVQAEAAGVPCHTDMNPLLLKPSSDHTSQVVLNGRPIGNRNAFEYFRKEGREELRQEVNAAFDRLAARYNPIVMEGAGSISEINLRDTDLVNMPMACYADADVILVADIDRGGVFASVYGSVMLQTPEDKKRIKGVIINKFRGDIRLFESGVKMMEDLCGIPVLGIIPYYRNIHIEEEDSVGLDYKRMQAVEGKINIAVVLLRHLSNFTDFNRLERDERVHLYYTNNTEDLAKADIILLPGSKSTLDDLYELRRNGVAQAVLRAHREGVTVMGICGGYQLMGLEIHDPEGVEGEIRQLPGLGLLPVITTMQGEKVTRQVNFHFLENAETCQGYEIHMGETRPVPGEAVVPLNKLEDGGEDGCFVNQKCMGSYIHGILDNQAFIDYLLEPYAEKLECHTVLDYRTYKEEQYDKLAEHVRSHLNLPLLYQIMSGND.

A GATase cobBQ-type domain is found at 256-444; sequence KINIAVVLLR…IHGILDNQAF (189 aa). The active-site Nucleophile is the Cys337. His436 is an active-site residue.

It belongs to the CobB/CobQ family. CobQ subfamily.

The protein operates within cofactor biosynthesis; adenosylcobalamin biosynthesis. Its function is as follows. Catalyzes amidations at positions B, D, E, and G on adenosylcobyrinic A,C-diamide. NH(2) groups are provided by glutamine, and one molecule of ATP is hydrogenolyzed for each amidation. The sequence is that of Cobyric acid synthase from Phocaeicola vulgatus (strain ATCC 8482 / DSM 1447 / JCM 5826 / CCUG 4940 / NBRC 14291 / NCTC 11154) (Bacteroides vulgatus).